A 292-amino-acid chain; its full sequence is NAD kinase (292 aa).

The Proton acceptor role is filled by Asp73. NAD(+) contacts are provided by residues 73–74 (DG), 147–148 (NE), His158, Arg175, Asp177, 188–193 (TAYSLS), and Gln247.

It belongs to the NAD kinase family. The cofactor is a divalent metal cation.

Its subcellular location is the cytoplasm. The enzyme catalyses NAD(+) + ATP = ADP + NADP(+) + H(+). Functionally, involved in the regulation of the intracellular balance of NAD and NADP, and is a key enzyme in the biosynthesis of NADP. Catalyzes specifically the phosphorylation on 2'-hydroxyl of the adenosine moiety of NAD to yield NADP. In Escherichia coli (strain SMS-3-5 / SECEC), this protein is NAD kinase.